Reading from the N-terminus, the 84-residue chain is Small ribosomal subunit protein bS20 (84 aa).

Positions 1–25 (MPVIKSAMKRVRTSEKAAARNRSQM) are disordered.

The protein belongs to the bacterial ribosomal protein bS20 family.

Its function is as follows. Binds directly to 16S ribosomal RNA. The sequence is that of Small ribosomal subunit protein bS20 from Pediococcus pentosaceus (strain ATCC 25745 / CCUG 21536 / LMG 10740 / 183-1w).